Consider the following 336-residue polypeptide: DNA-directed RNA polymerase subunit alpha (336 aa).

The segment at 1–234 (MIEFVIPKKL…NHFKIVTEGL (234 aa)) is alpha N-terminal domain (alpha-NTD). The alpha C-terminal domain (alpha-CTD) stretch occupies residues 269–336 (VYNRKIDELE…KFGLELRKGE (68 aa)).

Belongs to the RNA polymerase alpha chain family. Homodimer. The RNAP catalytic core consists of 2 alpha, 1 beta, 1 beta' and 1 omega subunit. When a sigma factor is associated with the core the holoenzyme is formed, which can initiate transcription.

It carries out the reaction RNA(n) + a ribonucleoside 5'-triphosphate = RNA(n+1) + diphosphate. Its function is as follows. DNA-dependent RNA polymerase catalyzes the transcription of DNA into RNA using the four ribonucleoside triphosphates as substrates. This is DNA-directed RNA polymerase subunit alpha from Thermotoga petrophila (strain ATCC BAA-488 / DSM 13995 / JCM 10881 / RKU-1).